The chain runs to 317 residues: Serine/threonine-protein phosphatase PP1 isozyme 1 (317 aa).

Residues Asp-75, His-77, Asp-103, and Asn-135 each coordinate Mn(2+). His-136 serves as the catalytic Proton donor. Residues His-184 and His-259 each coordinate Mn(2+).

This sequence belongs to the PPP phosphatase family. PP-1 subfamily. It depends on Mn(2+) as a cofactor.

The catalysed reaction is O-phospho-L-seryl-[protein] + H2O = L-seryl-[protein] + phosphate. It catalyses the reaction O-phospho-L-threonyl-[protein] + H2O = L-threonyl-[protein] + phosphate. The sequence is that of Serine/threonine-protein phosphatase PP1 isozyme 1 (NPP1) from Nicotiana tabacum (Common tobacco).